A 561-amino-acid chain; its full sequence is Efflux pump bfoC (561 aa).

The tract at residues 1–55 (MSDTARILGGPSASSSRDGGMELNSFTEVSQTNSRSHSTKEEEGQVDDQQRPARE) is disordered. The segment covering 24 to 36 (NSFTEVSQTNSRS) has biased composition (polar residues). A compositionally biased stretch (basic and acidic residues) spans 38-55 (STKEEEGQVDDQQRPARE). 13 helical membrane-spanning segments follow: residues 59–79 (GVLG…CIFC), 103–123 (DVGW…LTFG), 128–148 (FFPI…GSFI), 164–184 (VAGL…SQCV), 194–214 (GFIM…GGAF), 222–242 (WCFY…LFTF), 257–277 (AVGL…CLLL), 293–313 (VVAL…LQLW), 335–355 (LYGF…PIWF), 378–398 (VVFA…GPFM), 425–445 (IGYQ…PIFV), 457–477 (TATA…VSVA), and 530–550 (VHTF…ATVI).

This sequence belongs to the major facilitator superfamily. TCR/Tet family.

It is found in the cell membrane. In terms of biological role, efflux pump; part of the gene cluster that mediates the biosynthesis of bifonsecin B, a dimeric gamma-naphthopyrone. The sequence is that of Efflux pump bfoC from Aspergillus brasiliensis (strain CBS 101740 / IMI 381727 / IBT 21946).